Reading from the N-terminus, the 236-residue chain is ATP phosphoribosyltransferase (236 aa).

It belongs to the ATP phosphoribosyltransferase family. Short subfamily. Heteromultimer composed of HisG and HisZ subunits.

Its subcellular location is the cytoplasm. It carries out the reaction 1-(5-phospho-beta-D-ribosyl)-ATP + diphosphate = 5-phospho-alpha-D-ribose 1-diphosphate + ATP. The protein operates within amino-acid biosynthesis; L-histidine biosynthesis; L-histidine from 5-phospho-alpha-D-ribose 1-diphosphate: step 1/9. Catalyzes the condensation of ATP and 5-phosphoribose 1-diphosphate to form N'-(5'-phosphoribosyl)-ATP (PR-ATP). Has a crucial role in the pathway because the rate of histidine biosynthesis seems to be controlled primarily by regulation of HisG enzymatic activity. This Cereibacter sphaeroides (strain ATCC 17023 / DSM 158 / JCM 6121 / CCUG 31486 / LMG 2827 / NBRC 12203 / NCIMB 8253 / ATH 2.4.1.) (Rhodobacter sphaeroides) protein is ATP phosphoribosyltransferase (hisG).